Consider the following 70-residue polypeptide: Testis-expressed protein 53 (70 aa).

Expressed in Testis.

In Homo sapiens (Human), this protein is Testis-expressed protein 53.